The sequence spans 1128 residues: Nck-associated protein 1 (1128 aa).

Ser-2 is subject to N-acetylserine. The interval 640–665 (AVNKKSKKQTGKKGEPEREKPGVESM) is disordered. Positions 651 to 665 (KKGEPEREKPGVESM) are enriched in basic and acidic residues. A helical transmembrane segment spans residues 995–1015 (IACLLMVFVAVSLPTLASNVM).

This sequence belongs to the HEM-1/HEM-2 family. As to quaternary structure, component of the WAVE1 complex composed of ABI2, CYFIP1 or CYFIP2, BRK1, NCKAP1 and WASF1/WAVE1. Within the complex, a heterodimer containing NCKAP1 and CYFIP1 interacts with a heterotrimer formed by WAVE1, ABI2 and BRK1. Component of the WAVE2 complex composed of ABI1, CYFIP1/SRA1, NCKAP1/NAP1 and WASF2/WAVE2. CYFIP2 binds to activated RAC1 which causes the complex to dissociate, releasing activated WASF1. The complex can also be activated by NCK1. Associates preferentially with the first SH3 domain of NCK. Interacts with NYAP1, NYAP2 and MYO16. Interacts with TMEM132D. (Microbial infection) Interacts with human cytomegalovirus protein UL135. In terms of tissue distribution, expressed in all tissues examined except peripheral blood leukocytes, with highest expression in brain, heart, and skeletal muscle. Expressed in cells of various brain regions including Purkinje cells and dentate nucleus of the cerebellum, CA4 region and dentate gyrus of the hippocampus, and in frontal gray and white matter.

The protein resides in the cell membrane. The protein localises to the cell projection. Its subcellular location is the lamellipodium membrane. In terms of biological role, part of the WAVE complex that regulates lamellipodia formation. The WAVE complex regulates actin filament reorganization via its interaction with the Arp2/3 complex. Actin remodeling activity is regulated by RAC1. As component of the WAVE1 complex, required for BDNF-NTRK2 endocytic trafficking and signaling from early endosomes. The polypeptide is Nck-associated protein 1 (NCKAP1) (Homo sapiens (Human)).